Consider the following 530-residue polypeptide: Light-independent protochlorophyllide reductase subunit B (530 aa).

Asp-36 is a binding site for [4Fe-4S] cluster. The active-site Proton donor is the Asp-290. Residue 425-426 participates in substrate binding; that stretch reads GL. A disordered region spans residues 448-483; that stretch reads LGHLGGHASETKTSSKGINQSPNNHSPAGESIHWTS. The span at 458 to 473 shows a compositional bias: polar residues; it reads TKTSSKGINQSPNNHS.

The protein belongs to the ChlB/BchB/BchZ family. In terms of assembly, protochlorophyllide reductase is composed of three subunits; ChlL, ChlN and ChlB. Forms a heterotetramer of two ChlB and two ChlN subunits. [4Fe-4S] cluster is required as a cofactor.

The enzyme catalyses chlorophyllide a + oxidized 2[4Fe-4S]-[ferredoxin] + 2 ADP + 2 phosphate = protochlorophyllide a + reduced 2[4Fe-4S]-[ferredoxin] + 2 ATP + 2 H2O. Its pathway is porphyrin-containing compound metabolism; chlorophyll biosynthesis (light-independent). Its function is as follows. Component of the dark-operative protochlorophyllide reductase (DPOR) that uses Mg-ATP and reduced ferredoxin to reduce ring D of protochlorophyllide (Pchlide) to form chlorophyllide a (Chlide). This reaction is light-independent. The NB-protein (ChlN-ChlB) is the catalytic component of the complex. This is Light-independent protochlorophyllide reductase subunit B from Prochlorococcus marinus (strain SARG / CCMP1375 / SS120).